Reading from the N-terminus, the 492-residue chain is Putative heme-binding protein VNG_2021C (492 aa).

His-177 provides a ligand contact to heme. The interval 253–301 is disordered; sequence AGERVPAPEGGADAHGEGERTHHHGDSDHHDGDDGEQHHHSTGDEADDG. Positions 264-301 are enriched in basic and acidic residues; sequence ADAHGEGERTHHHGDSDHHDGDDGEQHHHSTGDEADDG. Residues 402–490 enclose the ABM domain; that stretch reads GTMGMFYETK…VLADRPRHVF (89 aa).

In the N-terminal section; belongs to the ChdC family.

The chain is Putative heme-binding protein VNG_2021C from Halobacterium salinarum (strain ATCC 700922 / JCM 11081 / NRC-1) (Halobacterium halobium).